We begin with the raw amino-acid sequence, 295 residues long: MRKLSRCEDGYVKIQGIYIYYKVCKAENEKAKLMTLHGGPGMSHDYLLSLTDLAEKGITVLFYDQFGCGRSEEPEKEKFTIDYGVEEAEAVKKNIFGDDKVFLMGSSYGGALALAYAVKYQAHLKGLIISGGLSSVPLTVKEMQRLIDELPEKYRNAIRKYGEVGDYQNPEYQEAVNYFYHQHLLRSEDWPPEVLKSLEYAEERNVYRTMNGPNEFTITGTIRDWDITDKIGIISVPTLITVGEFDEVTQNVAEVIHSKIDNSQLIVFKACSHLTMWEDRDEYNRILLQFIEKNI.

One can recognise an AB hydrolase-1 domain in the interval 35–279 (TLHGGPGMSH…ACSHLTMWED (245 aa)). Serine 107 acts as the Nucleophile in catalysis. Residue aspartate 246 is part of the active site. Catalysis depends on histidine 273, which acts as the Proton donor.

It belongs to the peptidase S33 family. As to quaternary structure, part of the tricorn proteolytic complex.

The catalysed reaction is Release of N-terminal proline from a peptide.. Functionally, cleaves H-Pro-AMC as well as a wide spectrum of amino acid substrates and several peptide substrates without a proline at the N-terminus. In conjunction with the three factors F1, F2 and F3, Tricorn degrades oligopeptides in a sequential manner, yielding free amino acids. This is Proline iminopeptidase (pip) from Thermoplasma volcanium (strain ATCC 51530 / DSM 4299 / JCM 9571 / NBRC 15438 / GSS1).